We begin with the raw amino-acid sequence, 446 residues long: Dimethylsulfoniopropionate lyase DddP (446 aa).

Positions 1 to 13 (MNQHYSETRKIDP) are enriched in basic and acidic residues. Residues 1–30 (MNQHYSETRKIDPSRGATLGDNTPNDNNRI) form a disordered region. A divalent metal cation-binding residues include Asp-295, Asp-297, Asp-307, His-371, Glu-406, and Glu-421.

It belongs to the peptidase M24B family. Homodimer. It depends on a divalent metal cation as a cofactor.

It catalyses the reaction S,S-dimethyl-beta-propiothetin = acrylate + dimethyl sulfide + H(+). Its function is as follows. Able to cleave dimethylsulfoniopropionate (DMSP), releasing dimethyl sulfide (DMS). DMS is the principal form by which sulfur is transported from oceans to the atmosphere. The real activity of the protein is however subject to debate and it is unclear whether it constitutes a real dimethylsulfoniopropionate lyase in vivo: the low activity with DMSP as substrate suggests that DMSP is not its native substrate. This chain is Dimethylsulfoniopropionate lyase DddP, found in Roseovarius nubinhibens (strain ATCC BAA-591 / DSM 15170 / ISM).